The primary structure comprises 438 residues: Trigger factor (438 aa).

In terms of domain architecture, PPIase FKBP-type spans 160–231 (SDQVTIEEQG…IMDVKTKQLQ (72 aa)). Positions 407 to 438 (AQLSGPQAETVAADQGEQQAEGQEESAEKSEE) are disordered. Residues 418–427 (AADQGEQQAE) are compositionally biased toward low complexity.

Belongs to the FKBP-type PPIase family. Tig subfamily.

It is found in the cytoplasm. The catalysed reaction is [protein]-peptidylproline (omega=180) = [protein]-peptidylproline (omega=0). Involved in protein export. Acts as a chaperone by maintaining the newly synthesized protein in an open conformation. Functions as a peptidyl-prolyl cis-trans isomerase. The sequence is that of Trigger factor from Deinococcus deserti (strain DSM 17065 / CIP 109153 / LMG 22923 / VCD115).